Reading from the N-terminus, the 898-residue chain is Dipeptidyl peptidase 8 (898 aa).

Catalysis depends on charge relay system residues Ser755, Asp833, and His865.

It belongs to the peptidase S9B family. DPPIV subfamily. Homodimer. Forms a ternary complex with NLRP1, composed of a DPP8 homodimer, one full-length NLRP1 protein, and one cleaved C-terminus of NLRP1 (NACHT, LRR and PYD domains-containing protein 1, C-terminus). Forms a ternary complex with CARD8, composed of a DPP8 homodimer, one full-length NLRP1 protein, and one cleaved C-terminus of CARD8 (Caspase recruitment domain-containing protein 8, C-terminus). In the ternary complex, only one subunit of the DPP8 homodimer is bound to NLRP1 or CARD8. Ubiquitously expressed, with highest levels in testis, placenta, prostate, muscle and brain.

It is found in the cytoplasm. It carries out the reaction Release of an N-terminal dipeptide, Xaa-Yaa-|-Zaa-, from a polypeptide, preferentially when Yaa is Pro, provided Zaa is neither Pro nor hydroxyproline.. Inhibited by zinc. Inhibited by the serine proteinase inhibitor 4-(2-aminoethyl)benzenesulphonyl fluoride (AEBSF), and by di-isopropylfluorophosphate. Specifically inhibited by isoindoline derivatives. Inhibited by Val-boroPro (Talabostat, PT-100), a non-selective inhibitor, which triggers pyroptosis in monocytes and macrophages. Its function is as follows. Dipeptidyl peptidase that cleaves off N-terminal dipeptides from proteins having a Pro or Ala residue at position 2. Acts as a key inhibitor of caspase-1-dependent monocyte and macrophage pyroptosis in resting cells by preventing activation of NLRP1 and CARD8. Sequesters the cleaved C-terminal part of NLRP1 and CARD8, which respectively constitute the active part of the NLRP1 and CARD8 inflammasomes, in a ternary complex, thereby preventing their oligomerization and activation. The dipeptidyl peptidase activity is required to suppress NLRP1 and CARD8; however, neither NLRP1 nor CARD8 are bona fide substrates of DPP8, suggesting the existence of substrate(s) required for NLRP1 and CARD8 inhibition. This chain is Dipeptidyl peptidase 8, found in Homo sapiens (Human).